We begin with the raw amino-acid sequence, 273 residues long: Large ribosomal subunit protein uL2 (273 aa).

Disordered regions lie at residues 34-54 and 223-273; these read LEKKSKSGGRNNNGRITTRHI and VAMN…RRRK.

This sequence belongs to the universal ribosomal protein uL2 family. In terms of assembly, part of the 50S ribosomal subunit. Forms a bridge to the 30S subunit in the 70S ribosome.

In terms of biological role, one of the primary rRNA binding proteins. Required for association of the 30S and 50S subunits to form the 70S ribosome, for tRNA binding and peptide bond formation. It has been suggested to have peptidyltransferase activity; this is somewhat controversial. Makes several contacts with the 16S rRNA in the 70S ribosome. This is Large ribosomal subunit protein uL2 from Azotobacter vinelandii (strain DJ / ATCC BAA-1303).